The primary structure comprises 71 residues: Protein CYSTEINE-RICH TRANSMEMBRANE MODULE 6 (71 aa).

Over residues methionine 1 to alanine 12 the composition is skewed to polar residues. Positions methionine 1–threonine 36 are disordered. Over residues proline 14–glycine 30 the composition is skewed to pro residues. The chain crosses the membrane as a helical span at residues serine 48–cysteine 64.

It belongs to the CYSTM1 family. In terms of assembly, homodimer and heterodimers. Interacts with CYSTM7 and WIH1/CYSTM13. As to expression, mostly expressed in roots, stems, rosette leaves and siliques and, to a lower extent, in flowers and cauline leaves.

It localises to the cell membrane. It is found in the cytoplasm. Involved in resistance to abiotic stress. This Arabidopsis thaliana (Mouse-ear cress) protein is Protein CYSTEINE-RICH TRANSMEMBRANE MODULE 6.